A 206-amino-acid polypeptide reads, in one-letter code: LexA repressor (206 aa).

Residues 28 to 48 (RAEIARRLGFKSANAAEEHLK) constitute a DNA-binding region (H-T-H motif). Active-site for autocatalytic cleavage activity residues include Ser-123 and Lys-160.

The protein belongs to the peptidase S24 family. In terms of assembly, homodimer.

The enzyme catalyses Hydrolysis of Ala-|-Gly bond in repressor LexA.. Its function is as follows. Represses a number of genes involved in the response to DNA damage (SOS response), including recA and lexA. In the presence of single-stranded DNA, RecA interacts with LexA causing an autocatalytic cleavage which disrupts the DNA-binding part of LexA, leading to derepression of the SOS regulon and eventually DNA repair. The sequence is that of LexA repressor from Shewanella piezotolerans (strain WP3 / JCM 13877).